Here is a 225-residue protein sequence, read N- to C-terminus: Protein E26 (225 aa).

As to quaternary structure, interacts with proteins IE0 and IE1. Interacts with protein FP25K. Interacts with host importin alpha-16. In terms of processing, palmitoylated.

It localises to the host nucleus inner membrane. Its subcellular location is the virion. The protein resides in the host cytoplasm. It is found in the host nucleus. Functionally, plays a role in the sorting of ODV envelope proteins to the host inner nuclear membrane. May facilitate the fusion and release of nucleocapsids into the cytoplasm. Modulates the expression levels of IE0 and IE1. The protein is Protein E26 (DA26) of Lepidoptera (butterflies and moths).